The primary structure comprises 693 residues: MTRTALVTTALPYANGPLHLGHLVGYIQADIWVRARRMSGGKAWFVCADDTHGTPIMLAAEKAGVTPETFIANIQASHERDFAAFGVAFDHYDSTNSAANKALTEQFYLKLEAAGHISRRSVAQFYDPAKGMFLPDRYVKGICPNCGSADQYGDNCEVCGATYAPTDLKEPRSVVSGATPEMRDSEHFFFEVGHFDGFLRDWLAGDVALPGVKAKLGEWLNAEGGLRAWDISRDAPYFGFEIPGQPGKYFYVWLDAPIGYLSSFQTLCSRIGEDFEAHLRAGTSTELHHFLGKDIVNFHGLFWPAVLHGTGHRAPTRLHVNGYLTVDGAKMSKSRGTFVMARTFLDAGLEPEALRYYFAAKSGGGVDDLDLNLGDFIARVNADLVGKFVNLASRCAGFISKRFDGLLAAQLPDAAQYQRFVDGLAPIREAYERNDPAAAIRLTMTLADEANRYIDDVKPWVIAKQEGADAQLQAVCSQGLNLFRVLVTALKPVLPATAAQAEAFLAAPVNDWTELAQPLLGHRITDYTPLFTRIDPKKIDAMIDASKDTLQTTAAAAPTAKNEAAKPAAPAAAKTEANNADAPATIGIDDFAKLDLRIGKVLVCEFVEGSDKLLRFELDAGELGKRQIFSGIRGSYGEPEKLVGRSVVFIANLAPRKMRFGLSEGMILSAGFDGGALALLDADSGAQPGMPVR.

The short motif at 12 to 22 (PYANGPLHLGH) is the 'HIGH' region element. 4 residues coordinate Zn(2+): C143, C146, C156, and C159. Positions 330–334 (KMSKS) match the 'KMSKS' region motif. K333 is a binding site for ATP. Residues 557–576 (APTAKNEAAKPAAPAAAKTE) form a disordered region. Residues 590 to 693 (DFAKLDLRIG…SGAQPGMPVR (104 aa)) form the tRNA-binding domain.

It belongs to the class-I aminoacyl-tRNA synthetase family. MetG type 1 subfamily. As to quaternary structure, homodimer. It depends on Zn(2+) as a cofactor.

The protein localises to the cytoplasm. The enzyme catalyses tRNA(Met) + L-methionine + ATP = L-methionyl-tRNA(Met) + AMP + diphosphate. In terms of biological role, is required not only for elongation of protein synthesis but also for the initiation of all mRNA translation through initiator tRNA(fMet) aminoacylation. The chain is Methionine--tRNA ligase from Stenotrophomonas maltophilia (strain R551-3).